Here is a 72-residue protein sequence, read N- to C-terminus: MAKEELLEFPGEVTELLPNATFRVKLENEHEIIAHTAGKMRKNRIRVLAGDKVLVEMTPYDLTKGRITYRFK.

Positions 1–72 (MAKEELLEFP…TKGRITYRFK (72 aa)) constitute an S1-like domain.

Belongs to the IF-1 family. As to quaternary structure, component of the 30S ribosomal translation pre-initiation complex which assembles on the 30S ribosome in the order IF-2 and IF-3, IF-1 and N-formylmethionyl-tRNA(fMet); mRNA recruitment can occur at any time during PIC assembly.

Its subcellular location is the cytoplasm. Functionally, one of the essential components for the initiation of protein synthesis. Stabilizes the binding of IF-2 and IF-3 on the 30S subunit to which N-formylmethionyl-tRNA(fMet) subsequently binds. Helps modulate mRNA selection, yielding the 30S pre-initiation complex (PIC). Upon addition of the 50S ribosomal subunit IF-1, IF-2 and IF-3 are released leaving the mature 70S translation initiation complex. The sequence is that of Translation initiation factor IF-1 from Maricaulis maris (strain MCS10) (Caulobacter maris).